The chain runs to 32 residues: U5-ctenitoxin-Pn1a (32 aa).

Disulfide bonds link Cys-3/Cys-16, Cys-9/Cys-21, and Cys-15/Cys-30.

As to expression, expressed by the venom gland.

It localises to the secreted. Functionally, blocks voltage-gated sodium channels (Nav). Causes tail erection, scratching and a reduction in mobility at a dose level of 1.40 mg/mouse. In Phoneutria nigriventer (Brazilian armed spider), this protein is U5-ctenitoxin-Pn1a.